Here is an 86-residue protein sequence, read N- to C-terminus: Large ribosomal subunit protein uL23 (86 aa).

Belongs to the universal ribosomal protein uL23 family. In terms of assembly, part of the 50S ribosomal subunit. Contacts protein L29.

In terms of biological role, binds to 23S rRNA. One of the proteins that surrounds the polypeptide exit tunnel on the outside of the ribosome. The sequence is that of Large ribosomal subunit protein uL23 from Pyrococcus horikoshii (strain ATCC 700860 / DSM 12428 / JCM 9974 / NBRC 100139 / OT-3).